The chain runs to 517 residues: Methionine aminopeptidase 1b (517 aa).

The tract at residues 74 to 94 (YCNKENSNNNNNNNNNNNNNL) is disordered. The span at 79-94 (NSNNNNNNNNNNNNNL) shows a compositional bias: low complexity. The segment at 114–166 (ENLCSGCKKVLIKKLSCPICLKNKIFSYFCNQECFKGSWKEHQKIHENMNKEN) adopts a C6H2-type zinc-finger fold. 8 residues coordinate Zn(2+): Cys-117, Cys-120, Cys-130, Cys-133, Cys-143, Cys-147, His-155, and His-159. An a protein-binding site is contributed by His-325. Asp-342, Asp-353, and His-419 together coordinate Zn(2+). Residue His-426 coordinates a protein. 2 residues coordinate Zn(2+): Glu-452 and Glu-483.

It belongs to the peptidase M24A family. Methionine aminopeptidase type 1 subfamily. As to quaternary structure, associates with the 60S ribosomal subunit of the 80S translational complex. Zn(2+) is required as a cofactor. Co(2+) serves as cofactor. It depends on Mn(2+) as a cofactor. The cofactor is Fe(2+).

Its subcellular location is the cytoplasm. The catalysed reaction is Release of N-terminal amino acids, preferentially methionine, from peptides and arylamides.. Its activity is regulated as follows. Inhibited by pyrimidine derivative XC11. Functionally, cotranslationally removes the N-terminal methionine from nascent proteins. The N-terminal methionine is often cleaved when the second residue in the primary sequence is small and uncharged (Met-Ala-, Cys, Gly, Pro, Ser, Thr, or Val). May play an important role in parasite growth during the blood asexual stage. This is Methionine aminopeptidase 1b from Plasmodium falciparum (isolate 3D7).